The sequence spans 219 residues: Orotate phosphoribosyltransferase (219 aa).

A 5-phospho-alpha-D-ribose 1-diphosphate-binding site is contributed by K26. 34-35 (FF) lines the orotate pocket. 5-phospho-alpha-D-ribose 1-diphosphate contacts are provided by residues 72-73 (YK), R102, K103, K106, H108, and 128-136 (DDVITAGTA). The orotate site is built by T132 and R160.

Belongs to the purine/pyrimidine phosphoribosyltransferase family. PyrE subfamily. As to quaternary structure, homodimer.

It catalyses the reaction orotidine 5'-phosphate + diphosphate = orotate + 5-phospho-alpha-D-ribose 1-diphosphate. Its pathway is pyrimidine metabolism; UMP biosynthesis via de novo pathway; UMP from orotate: step 1/2. Catalyzes the transfer of a ribosyl phosphate group from 5-phosphoribose 1-diphosphate to orotate, leading to the formation of orotidine monophosphate (OMP). In Yarrowia lipolytica (strain CLIB 122 / E 150) (Yeast), this protein is Orotate phosphoribosyltransferase (URA5).